Here is a 438-residue protein sequence, read N- to C-terminus: Glycogen synthase (438 aa).

ADP-alpha-D-glucose is bound at residue Lys-16.

The protein belongs to the glycosyltransferase 1 family. Bacterial/plant glycogen synthase subfamily.

It catalyses the reaction [(1-&gt;4)-alpha-D-glucosyl](n) + ADP-alpha-D-glucose = [(1-&gt;4)-alpha-D-glucosyl](n+1) + ADP + H(+). Its pathway is glycan biosynthesis; glycogen biosynthesis. In terms of biological role, synthesizes alpha-1,4-glucan chains using ADP-glucose. This Thermus caldophilus protein is Glycogen synthase.